Here is a 535-residue protein sequence, read N- to C-terminus: T-complex protein 1 subunit beta (535 aa).

An N-acetylalanine modification is found at alanine 2. A Phosphoserine modification is found at serine 3. Lysine 13 carries the post-translational modification N6-acetyllysine. Glycine 44 contacts ADP. Glycine 44 is a binding site for ATP. Residue aspartate 97 coordinates Mg(2+). Glycine 98, threonine 99, threonine 100, serine 101, serine 168, and serine 169 together coordinate ADP. Residues glycine 98, threonine 99, and threonine 100 each coordinate ATP. Residue lysine 181 is modified to N6-acetyllysine. Residue lysine 248 forms a Glycyl lysine isopeptide (Lys-Gly) (interchain with G-Cter in SUMO2) linkage. Serine 260 is subject to Phosphoserine. A Phosphothreonine modification is found at threonine 261. Residues glycine 410, glutamate 495, and lysine 500 each contribute to the ADP site. Residues glutamate 495 and lysine 500 each contribute to the ATP site.

It belongs to the TCP-1 chaperonin family. In terms of assembly, component of the chaperonin-containing T-complex (TRiC), a hexadecamer composed of two identical back-to-back stacked rings enclosing a protein folding chamber. Each ring is made up of eight different subunits: TCP1/CCT1, CCT2, CCT3, CCT4, CCT5, CCT6A/CCT6, CCT7, CCT8. Interacts with PACRG. Interacts with FLCN. Interacts with DLEC1. Interacts with SVEP1. In terms of processing, the N-terminus is blocked.

The protein localises to the cytoplasm. It catalyses the reaction ATP + H2O = ADP + phosphate + H(+). Component of the chaperonin-containing T-complex (TRiC), a molecular chaperone complex that assists the folding of actin, tubulin and other proteins upon ATP hydrolysis. The TRiC complex mediates the folding of WRAP53/TCAB1, thereby regulating telomere maintenance. As part of the TRiC complex may play a role in the assembly of BBSome, a complex involved in ciliogenesis regulating transports vesicles to the cilia. The protein is T-complex protein 1 subunit beta (Cct2) of Mus musculus (Mouse).